The chain runs to 285 residues: Bifunctional protein FolD (285 aa).

Residues 165–167 (GRS) and serine 190 each bind NADP(+).

The protein belongs to the tetrahydrofolate dehydrogenase/cyclohydrolase family. In terms of assembly, homodimer.

It carries out the reaction (6R)-5,10-methylene-5,6,7,8-tetrahydrofolate + NADP(+) = (6R)-5,10-methenyltetrahydrofolate + NADPH. It catalyses the reaction (6R)-5,10-methenyltetrahydrofolate + H2O = (6R)-10-formyltetrahydrofolate + H(+). It functions in the pathway one-carbon metabolism; tetrahydrofolate interconversion. Catalyzes the oxidation of 5,10-methylenetetrahydrofolate to 5,10-methenyltetrahydrofolate and then the hydrolysis of 5,10-methenyltetrahydrofolate to 10-formyltetrahydrofolate. This is Bifunctional protein FolD from Staphylococcus carnosus (strain TM300).